Here is a 233-residue protein sequence, read N- to C-terminus: Large ribosomal subunit protein uL1 (233 aa).

The protein belongs to the universal ribosomal protein uL1 family. As to quaternary structure, part of the 50S ribosomal subunit.

In terms of biological role, binds directly to 23S rRNA. The L1 stalk is quite mobile in the ribosome, and is involved in E site tRNA release. Protein L1 is also a translational repressor protein, it controls the translation of the L11 operon by binding to its mRNA. This Rhizobium etli (strain CIAT 652) protein is Large ribosomal subunit protein uL1.